The sequence spans 26 residues: uncharacterized protein (26 aa).

Phosphorylated by YfhK.

Probable member of a two-component regulatory system YfhA/YfhK. This is an uncharacterized protein from Klebsiella oxytoca.